The following is a 170-amino-acid chain: Adenine phosphoribosyltransferase (170 aa).

This sequence belongs to the purine/pyrimidine phosphoribosyltransferase family. Homodimer.

Its subcellular location is the cytoplasm. It catalyses the reaction AMP + diphosphate = 5-phospho-alpha-D-ribose 1-diphosphate + adenine. Its pathway is purine metabolism; AMP biosynthesis via salvage pathway; AMP from adenine: step 1/1. Its function is as follows. Catalyzes a salvage reaction resulting in the formation of AMP, that is energically less costly than de novo synthesis. The protein is Adenine phosphoribosyltransferase of Lactococcus lactis subsp. lactis (strain IL1403) (Streptococcus lactis).